Reading from the N-terminus, the 224-residue chain is Toxin coregulated pilin (224 aa).

The propeptide at methionine 1–glycine 25 is atypical leader sequence. At methionine 26 the chain carries N-methylmethionine. The helical transmembrane segment at methionine 26–valine 46 threads the bilayer. The cysteines at positions 145 and 211 are disulfide-linked.

It is found in the fimbrium. The protein resides in the membrane. Its function is as follows. Major component of the toxin co-regulated pilus (tcp) which is a type IV pilus essential for bacterial aggregation and subsequent colonization in the host small intestine. This chain is Toxin coregulated pilin (tcpA), found in Vibrio cholerae serotype O1 (strain ATCC 39315 / El Tor Inaba N16961).